The chain runs to 324 residues: MELLPHEKQVVEYEKTIAEFKEKNKENSLLSSSEIQKLDKRLDRLKEKIYSDLTPWERVQICRHPSRPRTVNYIEGMCEEFVELCGDRTFRDDPAVVGGFAKIQGQRFMLIGQEKGCDTKSRMHRNFGMLCPEGFRKALRLAKMAEKFGLPIIFLVDTPGAFPGLTAEERGQGWAIATNLFELARLATPIIVIVIGEGCSGGALGMAIGDVVAMLEHSYYSVISPEGCASILWKDPKKNSDAAAMLKMHGEDLKGFAIVDAVIKEPIGGAHHNPAATYRSVQEYVLQEWLKLKDLPVEELLEKRYQKFRTIGLYETSSESDSEA.

A CoA carboxyltransferase C-terminal domain is found at 37–291 (KLDKRLDRLK…QEYVLQEWLK (255 aa)).

This sequence belongs to the AccA family. As to quaternary structure, acetyl-CoA carboxylase is a heterohexamer composed of biotin carboxyl carrier protein (AccB), biotin carboxylase (AccC) and two subunits each of ACCase subunit alpha (AccA) and ACCase subunit beta (AccD).

It is found in the cytoplasm. The catalysed reaction is N(6)-carboxybiotinyl-L-lysyl-[protein] + acetyl-CoA = N(6)-biotinyl-L-lysyl-[protein] + malonyl-CoA. It functions in the pathway lipid metabolism; malonyl-CoA biosynthesis; malonyl-CoA from acetyl-CoA: step 1/1. Functionally, component of the acetyl coenzyme A carboxylase (ACC) complex. First, biotin carboxylase catalyzes the carboxylation of biotin on its carrier protein (BCCP) and then the CO(2) group is transferred by the carboxyltransferase to acetyl-CoA to form malonyl-CoA. In Chlamydia trachomatis serovar D (strain ATCC VR-885 / DSM 19411 / UW-3/Cx), this protein is Acetyl-coenzyme A carboxylase carboxyl transferase subunit alpha.